The primary structure comprises 417 residues: NADH-quinone oxidoreductase subunit D (417 aa).

Belongs to the complex I 49 kDa subunit family. As to quaternary structure, NDH-1 is composed of 14 different subunits. Subunits NuoB, C, D, E, F, and G constitute the peripheral sector of the complex.

The protein localises to the cell inner membrane. The enzyme catalyses a quinone + NADH + 5 H(+)(in) = a quinol + NAD(+) + 4 H(+)(out). In terms of biological role, NDH-1 shuttles electrons from NADH, via FMN and iron-sulfur (Fe-S) centers, to quinones in the respiratory chain. The immediate electron acceptor for the enzyme in this species is believed to be ubiquinone. Couples the redox reaction to proton translocation (for every two electrons transferred, four hydrogen ions are translocated across the cytoplasmic membrane), and thus conserves the redox energy in a proton gradient. The polypeptide is NADH-quinone oxidoreductase subunit D (Burkholderia lata (strain ATCC 17760 / DSM 23089 / LMG 22485 / NCIMB 9086 / R18194 / 383)).